Consider the following 208-residue polypeptide: Protein-L-isoaspartate O-methyltransferase (208 aa).

The active site involves Ser-59.

Belongs to the methyltransferase superfamily. L-isoaspartyl/D-aspartyl protein methyltransferase family.

It is found in the cytoplasm. The enzyme catalyses [protein]-L-isoaspartate + S-adenosyl-L-methionine = [protein]-L-isoaspartate alpha-methyl ester + S-adenosyl-L-homocysteine. Its function is as follows. Catalyzes the methyl esterification of L-isoaspartyl residues in peptides and proteins that result from spontaneous decomposition of normal L-aspartyl and L-asparaginyl residues. It plays a role in the repair and/or degradation of damaged proteins. This Serratia proteamaculans (strain 568) protein is Protein-L-isoaspartate O-methyltransferase.